The primary structure comprises 175 residues: MLDLGLSKMALIGVVALVVLGPERLPRVARTAGALFGRAQRYINDVKAEVSREIELDALRTMKTDFEQAARNVENTIHDNLREHERDLNAAWNSAVSPGGSAAADAPDGPSAASGEPSWRTIAAAPAKRRNWRVKKAVTPVWYKRATMRRTQVQSGAARVARHRPASLRRPARFL.

The helical transmembrane segment at 1–21 (MLDLGLSKMALIGVVALVVLG) threads the bilayer. Low complexity predominate over residues 94 to 115 (SAVSPGGSAAADAPDGPSAASG). 2 disordered regions span residues 94–118 (SAVSPGGSAAADAPDGPSAASGEPS) and 153–175 (VQSGAARVARHRPASLRRPARFL). A compositionally biased stretch (basic residues) spans 160 to 175 (VARHRPASLRRPARFL).

This sequence belongs to the TatB family. In terms of assembly, the Tat system comprises two distinct complexes: a TatABC complex, containing multiple copies of TatA, TatB and TatC subunits, and a separate TatA complex, containing only TatA subunits. Substrates initially bind to the TatABC complex, which probably triggers association of the separate TatA complex to form the active translocon.

It is found in the cell inner membrane. In terms of biological role, part of the twin-arginine translocation (Tat) system that transports large folded proteins containing a characteristic twin-arginine motif in their signal peptide across membranes. Together with TatC, TatB is part of a receptor directly interacting with Tat signal peptides. TatB may form an oligomeric binding site that transiently accommodates folded Tat precursor proteins before their translocation. This chain is Sec-independent protein translocase protein TatB, found in Burkholderia pseudomallei (strain 1106a).